The chain runs to 217 residues: 3-demethoxyubiquinol 3-hydroxylase (217 aa).

Positions 66, 96, 99, 148, 180, and 183 each coordinate Fe cation.

Belongs to the COQ7 family. It depends on Fe cation as a cofactor.

It is found in the cell membrane. The catalysed reaction is a 5-methoxy-2-methyl-3-(all-trans-polyprenyl)benzene-1,4-diol + AH2 + O2 = a 3-demethylubiquinol + A + H2O. Its pathway is cofactor biosynthesis; ubiquinone biosynthesis. In terms of biological role, catalyzes the hydroxylation of 2-nonaprenyl-3-methyl-6-methoxy-1,4-benzoquinol during ubiquinone biosynthesis. This chain is 3-demethoxyubiquinol 3-hydroxylase, found in Xylella fastidiosa (strain Temecula1 / ATCC 700964).